Consider the following 543-residue polypeptide: Rop guanine nucleotide exchange factor 11 (543 aa).

Residues 61-89 are disordered; that stretch reads QPGKCGSVDRPSLPIGGVTPNRNDKLPRV. Residues 95–456 enclose the PRONE domain; that stretch reads MEALIILQAA…QLTQEPTNNA (362 aa).

Interacts with ARAC4/ROP2, ARAC3/ROP, ARAC9/ROP8, PHYA and PHYB. In terms of tissue distribution, highly expressed in elongating regions of roots and pollen grains. Expressed in flowers, and at lower levels in leaves and stems.

It is found in the cytoplasm. Guanine-nucleotide exchange factor (GEF) that acts as an activator of Rop (Rho of plants) GTPases by promoting the exchange of GDP for GTP. Functions as a light-signaling switch that functions in root growth and development through the activation of Rop in a phytochrome-dependent manner. May act as a negative regulator of phytochrome-mediated primary root development. The protein is Rop guanine nucleotide exchange factor 11 (ROPGEF11) of Arabidopsis thaliana (Mouse-ear cress).